The following is a 279-amino-acid chain: Large ribosomal subunit protein uL2 (279 aa).

Disordered stretches follow at residues 1–59 (MGIR…GGHK) and 224–279 (VAMN…KNKR). Residues 50-59 (TTRHKGGGHK) show a composition bias toward basic residues. The segment covering 253–268 (REGRTRRPNKESDKLI) has biased composition (basic and acidic residues). Residues 269–279 (VRRRRTGKNKR) show a composition bias toward basic residues.

Belongs to the universal ribosomal protein uL2 family. As to quaternary structure, part of the 50S ribosomal subunit. Forms a bridge to the 30S subunit in the 70S ribosome.

One of the primary rRNA binding proteins. Required for association of the 30S and 50S subunits to form the 70S ribosome, for tRNA binding and peptide bond formation. It has been suggested to have peptidyltransferase activity; this is somewhat controversial. Makes several contacts with the 16S rRNA in the 70S ribosome. This is Large ribosomal subunit protein uL2 from Pseudarthrobacter chlorophenolicus (strain ATCC 700700 / DSM 12829 / CIP 107037 / JCM 12360 / KCTC 9906 / NCIMB 13794 / A6) (Arthrobacter chlorophenolicus).